The primary structure comprises 209 residues: 3-demethoxyubiquinol 3-hydroxylase (209 aa).

Low complexity predominate over residues 23 to 36 (PHATRAAPAPAQAP). Residues 23–42 (PHATRAAPAPAQAPGEMTDS) are disordered. Residues E58, E88, H91, E140, E172, and H175 each coordinate Fe cation.

It belongs to the COQ7 family. Fe cation serves as cofactor.

The protein localises to the cell membrane. It carries out the reaction a 5-methoxy-2-methyl-3-(all-trans-polyprenyl)benzene-1,4-diol + AH2 + O2 = a 3-demethylubiquinol + A + H2O. It participates in cofactor biosynthesis; ubiquinone biosynthesis. Its function is as follows. Catalyzes the hydroxylation of 2-nonaprenyl-3-methyl-6-methoxy-1,4-benzoquinol during ubiquinone biosynthesis. The protein is 3-demethoxyubiquinol 3-hydroxylase of Variovorax paradoxus (strain S110).